The following is a 78-amino-acid chain: cAMP-dependent protein kinase inhibitor beta (78 aa).

Over residues 1–10 (MRTDSSKMTD) the composition is skewed to basic and acidic residues. Residues 1–78 (MRTDSSKMTD…QLEKPQNEEK (78 aa)) are disordered. A compositionally biased stretch (polar residues) spans 33–42 (IQSSAATDGT). Positions 53–78 (SVKEDAKEKDEKTTQDQLEKPQNEEK) are enriched in basic and acidic residues.

This sequence belongs to the PKI family.

Functionally, extremely potent competitive inhibitor of cAMP-dependent protein kinase activity, this protein interacts with the catalytic subunit of the enzyme after the cAMP-induced dissociation of its regulatory chains. The sequence is that of cAMP-dependent protein kinase inhibitor beta (PKIB) from Homo sapiens (Human).